The following is a 244-amino-acid chain: Protein A47 (244 aa).

Belongs to the orthopoxvirus A47 protein family.

This chain is Protein A47, found in Variola virus.